Consider the following 362-residue polypeptide: Mortality factor 4-like protein 1 (362 aa).

Residues 12 to 51 (QEGERVLCFHGPLLYEAKCVKVAIKDKQVKYFIHYSGWNK) form the Tudor-knot domain. Positions 26–62 (YEAKCVKVAIKDKQVKYFIHYSGWNKKSAVRPRRSEK) are interaction with KAT8. The tract at residues 113–182 (RELQKANQEQ…RKKRARVDPT (70 aa)) is disordered. The interval 133-266 (PGKKTSGLQQ…VAGIKEYFNV (134 aa)) is sufficient for interaction with SIN3A. The short motif at 135–146 (KKTSGLQQKNVE) is the Nuclear localization signal element. Residue Lys-143 is modified to N6-acetyllysine. Positions 164–230 (STSETPQPPR…FYLPAKKNVD (67 aa)) are interaction with RB1-1. The tract at residues 188–342 (TFMNRVEVKV…FLKYLAKNSA (155 aa)) is sufficient for interaction with PHF12. Residues 191–362 (NRVEVKVKIP…APPEYHRKAV (172 aa)) enclose the MRG domain. Residues 323 to 344 (LALLLNYLHDFLKYLAKNSATL) form an interaction with RB1-2 region.

In terms of assembly, component of the NuA4 histone acetyltransferase complex which contains the catalytic subunit KAT5/TIP60 and the subunits EP400, TRRAP/PAF400, BRD8/SMAP, EPC1, DMAP1/DNMAP1, RUVBL1/TIP49, RUVBL2, ING3, actin, ACTL6A/BAF53A, MORF4L1/MRG15, MORF4L2/MRGX, MRGBP, YEATS4/GAS41, VPS72/YL1 and MEAF6. The NuA4 complex interacts with MYC and the adenovirus E1A protein. MORF4L1 may also participate in the formation of NuA4 related complexes which lack the KAT5/TIP60 catalytic subunit, but which include the SWI/SNF related protein SRCAP. Component of the mSin3A histone deacetylase complex, which includes SIN3A, HDAC2, ARID4B, MORF4L1, RBBP4/RbAp48, and RBBP7/RbAp46. May also interact with PHF12 and one or more as yet undefined members of the TLE (transducin-like enhancer of split) family of transcriptional repressors. Component of the SIN3B complex, which includes SIN3B, HDAC2 or HDAC1, PHF12 and MORF4L1. Interacts with RB1 and KAT8. Interacts with the N-terminus of MRFAP1. Found in a complex composed of MORF4L1, MRFAP1 and RB1. Interacts with the entire BRCA complex, which contains BRCA1, PALB2, BRCA2 and RAD51. Interacts with PALB2. Forms a complex with MSL1 and NUPR1.

It is found in the nucleus. Functionally, component of the NuA4 histone acetyltransferase (HAT) complex which is involved in transcriptional activation of select genes principally by acetylation of nucleosomal histones H4 and H2A. This modification may both alter nucleosome - DNA interactions and promote interaction of the modified histones with other proteins which positively regulate transcription. This complex may be required for the activation of transcriptional programs associated with oncogene and proto-oncogene mediated growth induction, tumor suppressor mediated growth arrest and replicative senescence, apoptosis, and DNA repair. The NuA4 complex ATPase and helicase activities seem to be, at least in part, contributed by the association of RUVBL1 and RUVBL2 with EP400. NuA4 may also play a direct role in DNA repair when directly recruited to sites of DNA damage. As part of the SIN3B complex represses transcription and counteracts the histone acetyltransferase activity of EP300 through the recognition H3K27ac marks by PHF12 and the activity of the histone deacetylase HDAC2. SIN3B complex is recruited downstream of the constitutively active genes transcriptional start sites through interaction with histones and mitigates histone acetylation and RNA polymerase II progression within transcribed regions contributing to the regulation of transcription. Required for homologous recombination repair (HRR) and resistance to mitomycin C (MMC). Involved in the localization of PALB2, BRCA2 and RAD51, but not BRCA1, to DNA-damage foci. In Homo sapiens (Human), this protein is Mortality factor 4-like protein 1.